The chain runs to 114 residues: Iron-sulfur cluster insertion protein ErpA (114 aa).

3 residues coordinate iron-sulfur cluster: Cys-42, Cys-106, and Cys-108.

This sequence belongs to the HesB/IscA family. As to quaternary structure, homodimer. It depends on iron-sulfur cluster as a cofactor.

Functionally, required for insertion of 4Fe-4S clusters for at least IspG. In Enterobacter sp. (strain 638), this protein is Iron-sulfur cluster insertion protein ErpA.